The sequence spans 345 residues: Fructose-1,6-bisphosphatase class 1 (345 aa).

Mg(2+) is bound by residues Glu90, Asp109, Leu111, and Asp112. Substrate-binding positions include 112-115 (DGSS) and Asn199. Glu271 serves as a coordination point for Mg(2+).

Belongs to the FBPase class 1 family. As to quaternary structure, homotetramer. It depends on Mg(2+) as a cofactor.

The protein resides in the cytoplasm. The enzyme catalyses beta-D-fructose 1,6-bisphosphate + H2O = beta-D-fructose 6-phosphate + phosphate. It participates in carbohydrate biosynthesis; Calvin cycle. The sequence is that of Fructose-1,6-bisphosphatase class 1 from Rhodopseudomonas palustris (strain BisB5).